Consider the following 348-residue polypeptide: Phosphoribosylformylglycinamidine cyclo-ligase (348 aa).

It belongs to the AIR synthase family.

The protein localises to the cytoplasm. It carries out the reaction 2-formamido-N(1)-(5-O-phospho-beta-D-ribosyl)acetamidine + ATP = 5-amino-1-(5-phospho-beta-D-ribosyl)imidazole + ADP + phosphate + H(+). It participates in purine metabolism; IMP biosynthesis via de novo pathway; 5-amino-1-(5-phospho-D-ribosyl)imidazole from N(2)-formyl-N(1)-(5-phospho-D-ribosyl)glycinamide: step 2/2. The protein is Phosphoribosylformylglycinamidine cyclo-ligase of Geobacter metallireducens (strain ATCC 53774 / DSM 7210 / GS-15).